The following is an 864-amino-acid chain: Putative Gly-rich membrane protein Bcell_0380 (864 aa).

Residues 7–27 (ITFLAAFICIIFVIYAIYHSV) form a helical membrane-spanning segment. Residues 372 to 399 (TVENSFYDEDTTGQSDTGKGTPMSTADM) are disordered. Residues 383-395 (TGQSDTGKGTPMS) are compositionally biased toward polar residues.

It is found in the cell membrane. The chain is Putative Gly-rich membrane protein Bcell_0380 from Evansella cellulosilytica (strain ATCC 21833 / DSM 2522 / FERM P-1141 / JCM 9156 / N-4) (Bacillus cellulosilyticus).